A 427-amino-acid chain; its full sequence is Glutamate-1-semialdehyde 2,1-aminomutase (427 aa).

Lys265 is subject to N6-(pyridoxal phosphate)lysine.

It belongs to the class-III pyridoxal-phosphate-dependent aminotransferase family. HemL subfamily. Homodimer. Pyridoxal 5'-phosphate is required as a cofactor.

The protein resides in the cytoplasm. The enzyme catalyses (S)-4-amino-5-oxopentanoate = 5-aminolevulinate. The protein operates within porphyrin-containing compound metabolism; protoporphyrin-IX biosynthesis; 5-aminolevulinate from L-glutamyl-tRNA(Glu): step 2/2. This chain is Glutamate-1-semialdehyde 2,1-aminomutase, found in Actinobacillus succinogenes (strain ATCC 55618 / DSM 22257 / CCUG 43843 / 130Z).